Here is a 148-residue protein sequence, read N- to C-terminus: Small ribosomal subunit protein bS16 (148 aa).

The tract at residues 106 to 148 (QAAARAAAGAEDRPATTPKKAKKSGSAEEAEAAPATDAPAAGQ) is disordered. A compositionally biased stretch (low complexity) spans 137 to 148 (AAPATDAPAAGQ).

This sequence belongs to the bacterial ribosomal protein bS16 family.

The sequence is that of Small ribosomal subunit protein bS16 from Frankia casuarinae (strain DSM 45818 / CECT 9043 / HFP020203 / CcI3).